Reading from the N-terminus, the 805-residue chain is Leucine--tRNA ligase (805 aa).

The 'HIGH' region motif lies at Pro40 to His51. Residues Lys576–Ser580 carry the 'KMSKS' region motif. Residue Lys579 participates in ATP binding.

It belongs to the class-I aminoacyl-tRNA synthetase family.

Its subcellular location is the cytoplasm. The enzyme catalyses tRNA(Leu) + L-leucine + ATP = L-leucyl-tRNA(Leu) + AMP + diphosphate. This Anoxybacillus flavithermus (strain DSM 21510 / WK1) protein is Leucine--tRNA ligase.